The primary structure comprises 1932 residues: DOCK-like protein 1 (1932 aa).

Residues 1410 to 1824 (LLEANRPELF…EIERYSRTLS (415 aa)) form the DOCKER domain. Polar residues predominate over residues 1908–1921 (STFLAGSQPNTNTD). The interval 1908-1932 (STFLAGSQPNTNTDSQHKHDYSHSG) is disordered. The span at 1922 to 1932 (SQHKHDYSHSG) shows a compositional bias: basic and acidic residues.

This sequence belongs to the DOCK family. Forms an active heterodimer with LMO1.

It is found in the cytoplasm. It localises to the mitochondrion. Forms a transiant heterodimeric complex with LMO1, that acts as a guanine nucleotide exchange factor exchange factor (GEF) for the small GTPase RHO5. DCK1, LMO1 and RHO5 relocate to mitochondria upon oxidative stress and trigger cell death. The DCK1/LMO1/RHO5 signaling module mediates mitochondrial turnover under nitrogen starvation conditions via mitophagy. The DCK1/LMO1/RHO5 signaling module plays also a function in cell wall integrity signaling. The sequence is that of DOCK-like protein 1 from Saccharomyces cerevisiae (strain ATCC 204508 / S288c) (Baker's yeast).